A 347-amino-acid chain; its full sequence is N-acetyl-gamma-glutamyl-phosphate reductase (347 aa).

The active site involves cysteine 151.

This sequence belongs to the NAGSA dehydrogenase family. Type 1 subfamily.

It localises to the cytoplasm. The enzyme catalyses N-acetyl-L-glutamate 5-semialdehyde + phosphate + NADP(+) = N-acetyl-L-glutamyl 5-phosphate + NADPH + H(+). Its pathway is amino-acid biosynthesis; L-arginine biosynthesis; N(2)-acetyl-L-ornithine from L-glutamate: step 3/4. Functionally, catalyzes the NADPH-dependent reduction of N-acetyl-5-glutamyl phosphate to yield N-acetyl-L-glutamate 5-semialdehyde. The chain is N-acetyl-gamma-glutamyl-phosphate reductase from Corynebacterium aurimucosum (strain ATCC 700975 / DSM 44827 / CIP 107346 / CN-1) (Corynebacterium nigricans).